The sequence spans 244 residues: 2,5-diamino-6-ribosylamino-4(3H)-pyrimidinone 5'-phosphate reductase (244 aa).

Residues Thr-74, Asp-78, Ile-160, and 183–187 contribute to the NADP(+) site; that span reads GSHVI.

The protein belongs to the HTP reductase family. Homodimer.

It carries out the reaction 2,5-diamino-6-(1-D-ribitylamino)pyrimidin-4(3H)-one 5'-phosphate + NADP(+) = 2,5-diamino-6-(1-D-ribosylamino)pyrimidin-4(3H)-one 5'-phosphate + NADPH + H(+). It catalyses the reaction 2,5-diamino-6-(1-D-ribitylamino)pyrimidin-4(3H)-one 5'-phosphate + NAD(+) = 2,5-diamino-6-(1-D-ribosylamino)pyrimidin-4(3H)-one 5'-phosphate + NADH + H(+). The protein operates within cofactor biosynthesis; riboflavin biosynthesis. Catalyzes an early step in riboflavin biosynthesis, the NADPH-dependent reduction of the ribose side chain of 2,5-diamino-6-ribosylamino-4(3H)-pyrimidinone 5'-phosphate, yielding 2,5-diamino-6-ribitylamino-4(3H)-pyrimidinone 5'-phosphate. The protein is 2,5-diamino-6-ribosylamino-4(3H)-pyrimidinone 5'-phosphate reductase (RIB7) of Candida glabrata (strain ATCC 2001 / BCRC 20586 / JCM 3761 / NBRC 0622 / NRRL Y-65 / CBS 138) (Yeast).